Reading from the N-terminus, the 547-residue chain is Chaperonin GroEL (547 aa).

Residues 30-33, lysine 51, 87-91, glycine 414, 478-480, and aspartate 494 contribute to the ATP site; these read TLGP, DGTTT, and NAA.

This sequence belongs to the chaperonin (HSP60) family. Forms a cylinder of 14 subunits composed of two heptameric rings stacked back-to-back. Interacts with the co-chaperonin GroES.

It is found in the cytoplasm. It carries out the reaction ATP + H2O + a folded polypeptide = ADP + phosphate + an unfolded polypeptide.. Its function is as follows. Together with its co-chaperonin GroES, plays an essential role in assisting protein folding. The GroEL-GroES system forms a nano-cage that allows encapsulation of the non-native substrate proteins and provides a physical environment optimized to promote and accelerate protein folding. The protein is Chaperonin GroEL of Klebsiella pneumoniae.